Here is a 495-residue protein sequence, read N- to C-terminus: Glutamate--tRNA ligase (495 aa).

Positions 12-22 (PSPTGHLHIGN) match the 'HIGH' region motif. The 'KMSKS' region motif lies at 259 to 263 (KLSKR). Position 262 (K262) interacts with ATP.

This sequence belongs to the class-I aminoacyl-tRNA synthetase family. Glutamate--tRNA ligase type 1 subfamily. In terms of assembly, monomer.

It localises to the cytoplasm. The catalysed reaction is tRNA(Glu) + L-glutamate + ATP = L-glutamyl-tRNA(Glu) + AMP + diphosphate. Functionally, catalyzes the attachment of glutamate to tRNA(Glu) in a two-step reaction: glutamate is first activated by ATP to form Glu-AMP and then transferred to the acceptor end of tRNA(Glu). This chain is Glutamate--tRNA ligase, found in Pediococcus pentosaceus (strain ATCC 25745 / CCUG 21536 / LMG 10740 / 183-1w).